Reading from the N-terminus, the 208-residue chain is MKILRIDSSPLGDASVSRQLTASIVAALRQATPDAEVSVRDLTVAPPDHLTGELMQVVKFRNLEGLTARQQEELALTDALVDEFLAADVVVIGAPMYNFTVPTQLKAWIDRIAQAGRTFRYTETGPVGLAGGKKVYIASTRGGVYSTNAAMSALDHQEAFLRTVLGFLGVTDVTVIRAEGVGMGPDARAKALAAAQQEIDALAVPVAA.

FMN is bound by residues Ser-9, 15–17 (SVS), 96–99 (MYNF), and 140–143 (TRGG).

Belongs to the azoreductase type 1 family. As to quaternary structure, homodimer. FMN serves as cofactor.

It carries out the reaction 2 a quinone + NADH + H(+) = 2 a 1,4-benzosemiquinone + NAD(+). It catalyses the reaction N,N-dimethyl-1,4-phenylenediamine + anthranilate + 2 NAD(+) = 2-(4-dimethylaminophenyl)diazenylbenzoate + 2 NADH + 2 H(+). In terms of biological role, quinone reductase that provides resistance to thiol-specific stress caused by electrophilic quinones. Also exhibits azoreductase activity. Catalyzes the reductive cleavage of the azo bond in aromatic azo compounds to the corresponding amines. This is FMN-dependent NADH:quinone oxidoreductase from Azospirillum brasilense.